We begin with the raw amino-acid sequence, 483 residues long: Zinc metalloproteinase/disintegrin VMP-II (483 aa).

The N-terminal stretch at 1-20 (MIQVLLVTLCLAAFPYQGNS) is a signal peptide. Positions 21 to 191 (IILESGNVND…KASQLNLTPE (171 aa)) are excised as a propeptide. In terms of domain architecture, Peptidase M12B spans 198 to 394 (RYIELVVVAD…HNPQCMLNEP (197 aa)). Ca(2+) contacts are provided by Glu201 and Asp285. Intrachain disulfides connect Cys309-Cys389, Cys349-Cys373, and Cys351-Cys356. His334 serves as a coordination point for Zn(2+). Glu335 is an active-site residue. Residues His338 and His344 each coordinate Zn(2+). Ca(2+) contacts are provided by Cys389 and Asn392. Positions 395-414 (LRTDIVSTPVSGNELWETGE) are excised as a propeptide. Residues 402-483 (TPVSGNELWE…AGCPRNPFHA (82 aa)) enclose the Disintegrin domain. Cystine bridges form between Cys425-Cys448, Cys439-Cys445, Cys444-Cys469, and Cys457-Cys476. The Cell attachment site; atypical (KGD) motif lies at 461 to 463 (KGD).

It belongs to the venom metalloproteinase (M12B) family. P-II subfamily. P-IIe sub-subfamily. In terms of assembly, heterodimer; disulfide-linked (disintegrin). Zn(2+) serves as cofactor. Expressed by the venom gland.

It is found in the secreted. Its activity is regulated as follows. Inhibited by EDTA and 1,10-phenanthroline, but not by PMSF. Its function is as follows. Has fibrinolytic activity. The recombinant enzyme cleaves both alpha- (FGA) and beta-chains (FGB) of fibrinogen, but not the gamma-chain. The recombinant protein does not produce hemorrhage in mice and does not have effect on ADP- or collagen-stimulated platelet aggregation. Functionally, inhibits platelet aggregation induced by ADP, thrombin, platelet-activating factor and collagen. Acts by inhibiting fibrinogen interaction with platelet receptors GPIIb/GPIIIa (ITGA2B/ITGB3). The chain is Zinc metalloproteinase/disintegrin VMP-II from Agkistrodon piscivorus leucostoma (Western cottonmouth).